Here is a 157-residue protein sequence, read N- to C-terminus: Endoribonuclease YbeY (157 aa).

Residues histidine 114, histidine 118, and histidine 124 each coordinate Zn(2+).

It belongs to the endoribonuclease YbeY family. It depends on Zn(2+) as a cofactor.

It is found in the cytoplasm. Functionally, single strand-specific metallo-endoribonuclease involved in late-stage 70S ribosome quality control and in maturation of the 3' terminus of the 16S rRNA. This chain is Endoribonuclease YbeY, found in Salmonella typhimurium (strain LT2 / SGSC1412 / ATCC 700720).